The primary structure comprises 1426 residues: Protein RhsD (1426 aa).

A disordered region spans residues 256 to 285 (AEEARTSSLSSSDSSRPLSASAFPDTLPGT). Over residues 262-277 (SSLSSSDSSRPLSASA) the composition is skewed to low complexity. A 28 X approximate tandem repeats region spans residues 320–1197 (YTEAGELLAV…LNEENPHHVY (878 aa)). 27 consecutive repeat copies span residues 334-356 (NTQV…HRYA), 357-378 (GRPE…LNPA), 379-421 (GLSY…ELAD), 422-442 (GSVT…TDAA), 443-464 (GRRT…TTPD), 465-485 (GRET…VSPD), 486-506 (GLES…TSRS), 507-529 (GETV…TDAT), 530-550 (GSTR…TDCS), 551-571 (GYQT…HREE), 572-592 (GISL…KDAQ), 593-613 (GRET…ITPD), 614-633 (GNRS…TTQG), 634-654 (GLTR…TNEN), 655-675 (GSHS…GGFD), 676-695 (GRTQ…SEDE), 696-715 (GLVI…RTVN), 716-738 (GEPA…HLSE), 739-762 (GHRV…QTVE), 812-832 (GGTP…VRSF), 833-861 (GSMA…HLNS), 862-882 (LVYD…ISGP), 883-905 (RQTR…LAPD), 906-941 (LDIR…NRIA), 942-970 (EDAH…VIRT), 971-995 (DDER…IQHG), and 996-1030 (EPLV…MSLS). The span at 1073–1085 (ENGEREKAQRRSL) shows a compositional bias: basic and acidic residues. Positions 1073–1097 (ENGEREKAQRRSLAETLQQEGSENG) are disordered. Copy 28 of the repeat occupies 1173 to 1197 (GNTAWSAEYDEWGNQLNEENPHHVY).

This sequence belongs to the RHS family.

Functionally, rhs elements have a nonessential function. They may play an important role in the natural ecology of the cell. The protein is Protein RhsD (rhsD) of Escherichia coli (strain K12).